Here is a 337-residue protein sequence, read N- to C-terminus: S-adenosylmethionine:tRNA ribosyltransferase-isomerase (337 aa).

It belongs to the QueA family. Monomer.

The protein resides in the cytoplasm. The catalysed reaction is 7-aminomethyl-7-carbaguanosine(34) in tRNA + S-adenosyl-L-methionine = epoxyqueuosine(34) in tRNA + adenine + L-methionine + 2 H(+). It participates in tRNA modification; tRNA-queuosine biosynthesis. Transfers and isomerizes the ribose moiety from AdoMet to the 7-aminomethyl group of 7-deazaguanine (preQ1-tRNA) to give epoxyqueuosine (oQ-tRNA). The protein is S-adenosylmethionine:tRNA ribosyltransferase-isomerase of Legionella pneumophila (strain Lens).